The chain runs to 393 residues: Sulfite oxidase (393 aa).

Residues 1 to 27 form a disordered region; that stretch reads MPGIRGPSEYSQEPPRHPSLKVNAKEP. The interval 10-242 is moco domain; that stretch reads YSQEPPRHPS…QGFFMQKDYK (233 aa). Residues 49–53, cysteine 98, 159–161, histidine 202, arginine 207, and 218–220 contribute to the Mo-molybdopterin site; these read YKRNH, SVD, and SVK. The homodimerization stretch occupies residues 243-393; the sequence is MFPPSVNWDN…VLLRLGHSNL (151 aa). A Microbody targeting signal motif is present at residues 391–393; sequence SNL.

In terms of assembly, predominantly monomer; also homodimer. It depends on Mo-molybdopterin as a cofactor.

It localises to the peroxisome. It catalyses the reaction sulfite + O2 + H2O = sulfate + H2O2. It participates in energy metabolism; sulfur metabolism. Probably involved in sulfite oxidative detoxification. This chain is Sulfite oxidase (SOX), found in Arabidopsis thaliana (Mouse-ear cress).